Reading from the N-terminus, the 964-residue chain is Translation initiation factor IF-2 (964 aa).

A disordered region spans residues Gln-49–Leu-357. Positions Ala-62–Pro-85 are enriched in low complexity. Residues Ala-86–Arg-102 show a composition bias toward pro residues. The segment covering Pro-103 to Ala-117 has biased composition (low complexity). Residues Pro-159–Gly-169 show a composition bias toward pro residues. 2 stretches are compositionally biased toward low complexity: residues Gly-190–Pro-212 and Gly-242–Gly-251. Composition is skewed to gly residues over residues Gly-252–Gly-261 and Gly-284–Gly-334. Residues Gly-335–Arg-346 are compositionally biased toward basic residues. Residues Ala-458 to Leu-629 form the tr-type G domain. Residues Gly-467–Thr-474 are G1. Gly-467–Thr-474 provides a ligand contact to GTP. The G2 stretch occupies residues Gly-492–Ala-496. Residues Asp-517–Gly-520 form a G3 region. GTP-binding positions include Asp-517–His-521 and Asn-571–Asp-574. Residues Asn-571 to Asp-574 are G4. A G5 region spans residues Ser-607–Arg-609.

It belongs to the TRAFAC class translation factor GTPase superfamily. Classic translation factor GTPase family. IF-2 subfamily.

It is found in the cytoplasm. One of the essential components for the initiation of protein synthesis. Protects formylmethionyl-tRNA from spontaneous hydrolysis and promotes its binding to the 30S ribosomal subunits. Also involved in the hydrolysis of GTP during the formation of the 70S ribosomal complex. This chain is Translation initiation factor IF-2, found in Cutibacterium acnes (strain DSM 16379 / KPA171202) (Propionibacterium acnes).